Reading from the N-terminus, the 221-residue chain is 7-cyano-7-deazaguanine synthase (221 aa).

Position 10–20 (10–20 (FSGGQDSTTCL)) interacts with ATP. 4 residues coordinate Zn(2+): cysteine 186, cysteine 195, cysteine 198, and cysteine 201.

The protein belongs to the QueC family. As to quaternary structure, homodimer. Requires Zn(2+) as cofactor.

The catalysed reaction is 7-carboxy-7-deazaguanine + NH4(+) + ATP = 7-cyano-7-deazaguanine + ADP + phosphate + H2O + H(+). Its pathway is purine metabolism; 7-cyano-7-deazaguanine biosynthesis. Functionally, catalyzes the ATP-dependent conversion of 7-carboxy-7-deazaguanine (CDG) to 7-cyano-7-deazaguanine (preQ(0)). This Geobacillus sp. (strain WCH70) protein is 7-cyano-7-deazaguanine synthase.